The sequence spans 119 residues: Tubulin-specific chaperone A (119 aa).

This sequence belongs to the TBCA family. As to quaternary structure, supercomplex made of cofactors A to E. Cofactors A and D function by capturing and stabilizing tubulin in a quasi-native conformation. Cofactor E binds to the cofactor D-tubulin complex; interaction with cofactor C then causes the release of tubulin polypeptides that are committed to the native state.

It localises to the cytoplasm. Its subcellular location is the cytoskeleton. In terms of biological role, required for the maintenance of microtubule structures and cell polarity. Beta-tubulin-folding protein; may have a regulatory role in the tubulin-folding pathway. This Schizosaccharomyces pombe (strain 972 / ATCC 24843) (Fission yeast) protein is Tubulin-specific chaperone A (alp31).